The following is a 238-amino-acid chain: Uridylate kinase (238 aa).

12–15 (KLSG) lines the ATP pocket. Gly-54 serves as a coordination point for UMP. The ATP site is built by Gly-55 and Arg-59. Residues Asp-74 and 135–142 (TGNPFFTT) each bind UMP. Residues Thr-162, Tyr-168, and Asp-171 each contribute to the ATP site.

Belongs to the UMP kinase family. In terms of assembly, homohexamer.

Its subcellular location is the cytoplasm. It catalyses the reaction UMP + ATP = UDP + ADP. The protein operates within pyrimidine metabolism; CTP biosynthesis via de novo pathway; UDP from UMP (UMPK route): step 1/1. Its activity is regulated as follows. Inhibited by UTP. Its function is as follows. Catalyzes the reversible phosphorylation of UMP to UDP. In Bordetella parapertussis (strain 12822 / ATCC BAA-587 / NCTC 13253), this protein is Uridylate kinase.